Here is a 442-residue protein sequence, read N- to C-terminus: UDP-N-acetylmuramoylalanine--D-glutamate ligase (442 aa).

Position 115-121 (115-121 (GSNGKST)) interacts with ATP.

The protein belongs to the MurCDEF family.

The protein localises to the cytoplasm. It catalyses the reaction UDP-N-acetyl-alpha-D-muramoyl-L-alanine + D-glutamate + ATP = UDP-N-acetyl-alpha-D-muramoyl-L-alanyl-D-glutamate + ADP + phosphate + H(+). It functions in the pathway cell wall biogenesis; peptidoglycan biosynthesis. Its function is as follows. Cell wall formation. Catalyzes the addition of glutamate to the nucleotide precursor UDP-N-acetylmuramoyl-L-alanine (UMA). This is UDP-N-acetylmuramoylalanine--D-glutamate ligase from Vibrio vulnificus (strain YJ016).